A 327-amino-acid polypeptide reads, in one-letter code: uncharacterized protein (327 aa).

Residues 12–79 (KRIDEFLAKE…LKKELDLEIE (68 aa)) enclose the S4 RNA-binding domain. Residue Asp136 is part of the active site.

Belongs to the pseudouridine synthase RluA family.

It carries out the reaction a uridine in RNA = a pseudouridine in RNA. This is an uncharacterized protein from Helicobacter pylori (strain J99 / ATCC 700824) (Campylobacter pylori J99).